The primary structure comprises 185 residues: Elongation factor P (185 aa).

This sequence belongs to the elongation factor P family.

Its subcellular location is the cytoplasm. It participates in protein biosynthesis; polypeptide chain elongation. Involved in peptide bond synthesis. Stimulates efficient translation and peptide-bond synthesis on native or reconstituted 70S ribosomes in vitro. Probably functions indirectly by altering the affinity of the ribosome for aminoacyl-tRNA, thus increasing their reactivity as acceptors for peptidyl transferase. The protein is Elongation factor P of Synechococcus sp. (strain JA-2-3B'a(2-13)) (Cyanobacteria bacterium Yellowstone B-Prime).